Here is a 275-residue protein sequence, read N- to C-terminus: MANSNPKLLVTQNPFSVFLLTFLLLITNVKSDSFSFNFPKFDTDTKSIIIDGDANTTNGVLQLTKKDQLGNPSPHSFGLSFFLGAIHLSDKQSGKVADFTTEFSFVVNPKGSQLHGDGFTFFIASLDYEFPEKSSDGGFLGLFDKESAFNTSQNSIVAVEFDSFRNEWDPQIAGNSPHIGIDINTIRSSATALWPIDRVPEGSIGKAHISYNPASKKLTALVTYLNGPVIEETAVSYTVDFAAILPEYVLVGFSGATGELAETHDILSWSFTSNL.

The first 31 residues, 1–31 (MANSNPKLLVTQNPFSVFLLTFLLLITNVKS), serve as a signal peptide directing secretion. 2 N-linked (GlcNAc...) asparagine glycosylation sites follow: Asn55 and Asn150.

This sequence belongs to the leguminous lectin family.

May be involved in arbuscular mycorrhizal (AM) symbiosis with AM fungi. This chain is Lectin 8, found in Medicago truncatula (Barrel medic).